The following is a 334-amino-acid chain: Ornithine carbamoyltransferase (334 aa).

Carbamoyl phosphate-binding positions include 56-59, glutamine 83, arginine 107, and 134-137; these read STRT and HPTQ. L-ornithine is bound by residues asparagine 168, aspartate 232, and 236-237; that span reads SM. Carbamoyl phosphate contacts are provided by residues 274-275 and arginine 320; that span reads CL.

Belongs to the aspartate/ornithine carbamoyltransferase superfamily. OTCase family.

It localises to the cytoplasm. The enzyme catalyses carbamoyl phosphate + L-ornithine = L-citrulline + phosphate + H(+). The protein operates within amino-acid biosynthesis; L-arginine biosynthesis; L-arginine from L-ornithine and carbamoyl phosphate: step 1/3. Reversibly catalyzes the transfer of the carbamoyl group from carbamoyl phosphate (CP) to the N(epsilon) atom of ornithine (ORN) to produce L-citrulline. This Escherichia coli (strain 55989 / EAEC) protein is Ornithine carbamoyltransferase.